Consider the following 86-residue polypeptide: Neurotoxin LmNaTx35.2 (86 aa).

The N-terminal stretch at 1 to 21 (MQLKIQLLMLVLMTVLTGVLG) is a signal peptide. The region spanning 22–85 (KDGYVVHEDT…VYGDKGTYCW (64 aa)) is the LCN-type CS-alpha/beta domain. 4 disulfides stabilise this stretch: Cys33/Cys84, Cys37/Cys60, Cys46/Cys65, and Cys50/Cys67.

Belongs to the long (4 C-C) scorpion toxin superfamily. Sodium channel inhibitor family. Alpha subfamily. In terms of tissue distribution, expressed by the venom gland.

It is found in the secreted. Binds voltage-independently at site-3 of voltage-gated sodium channels (Nav) and inhibits the inactivation of the activated channels, thereby blocking neuronal transmission. The polypeptide is Neurotoxin LmNaTx35.2 (Lychas mucronatus (Chinese swimming scorpion)).